Here is a 456-residue protein sequence, read N- to C-terminus: Argininosuccinate lyase (456 aa).

The protein belongs to the lyase 1 family. Argininosuccinate lyase subfamily.

It localises to the cytoplasm. It carries out the reaction 2-(N(omega)-L-arginino)succinate = fumarate + L-arginine. It functions in the pathway amino-acid biosynthesis; L-arginine biosynthesis; L-arginine from L-ornithine and carbamoyl phosphate: step 3/3. In Listeria monocytogenes serotype 4b (strain CLIP80459), this protein is Argininosuccinate lyase.